Consider the following 784-residue polypeptide: Ribosome biogenesis protein BOP1 homolog (784 aa).

The segment covering 1-11 has biased composition (basic residues); sequence MTKKLALKRRG. Positions 1–159 are disordered; that stretch reads MTKKLALKRR…DSDTSDEEDI (159 aa). Composition is skewed to acidic residues over residues 27-36, 45-54, 62-73, and 84-111; these read SENEEEEEDL, EDSTDDEGID, SEELQFESDEEG, and AEED…EDEE. 2 stretches are compositionally biased toward basic and acidic residues: residues 112–123 and 138–148; these read KDSKSKQTDDKP and LPKRDSSKPEY. Over residues 149–158 the composition is skewed to acidic residues; that stretch reads QDSDTSDEED. 7 WD repeats span residues 445–486, 488–526, 570–612, 615–653, 656–695, 699–738, and 754–784; these read GHTD…RTIE, DEVV…KVLV, THFK…SQIP, KSKG…LVKK, TNSK…KPYQ, LHRN…DLLQ, and RDEF…RLYT.

This sequence belongs to the WD repeat BOP1/ERB1 family.

The protein resides in the nucleus. It localises to the nucleolus. The protein localises to the nucleoplasm. Its function is as follows. Required for maturation of ribosomal RNAs and formation of the large ribosomal subunit. This chain is Ribosome biogenesis protein BOP1 homolog, found in Drosophila melanogaster (Fruit fly).